Reading from the N-terminus, the 67-residue chain is DNA-directed RNA polymerase subunit omega (67 aa).

The protein belongs to the RNA polymerase subunit omega family. As to quaternary structure, the RNAP catalytic core consists of 2 alpha, 1 beta, 1 beta' and 1 omega subunit. When a sigma factor is associated with the core the holoenzyme is formed, which can initiate transcription.

It carries out the reaction RNA(n) + a ribonucleoside 5'-triphosphate = RNA(n+1) + diphosphate. Its function is as follows. Promotes RNA polymerase assembly. Latches the N- and C-terminal regions of the beta' subunit thereby facilitating its interaction with the beta and alpha subunits. This Listeria monocytogenes serotype 4b (strain F2365) protein is DNA-directed RNA polymerase subunit omega.